We begin with the raw amino-acid sequence, 881 residues long: DNA mismatch repair protein MutS (881 aa).

Residue 605-612 participates in ATP binding; that stretch reads GPNMSGKS.

It belongs to the DNA mismatch repair MutS family.

In terms of biological role, this protein is involved in the repair of mismatches in DNA. It is possible that it carries out the mismatch recognition step. This protein has a weak ATPase activity. This Limosilactobacillus reuteri subsp. reuteri (strain JCM 1112) (Lactobacillus reuteri) protein is DNA mismatch repair protein MutS.